The following is a 262-amino-acid chain: Acyl-[acyl-carrier-protein]--UDP-N-acetylglucosamine O-acyltransferase (262 aa).

The protein belongs to the transferase hexapeptide repeat family. LpxA subfamily. Homotrimer.

It localises to the cytoplasm. The enzyme catalyses a (3R)-hydroxyacyl-[ACP] + UDP-N-acetyl-alpha-D-glucosamine = a UDP-3-O-[(3R)-3-hydroxyacyl]-N-acetyl-alpha-D-glucosamine + holo-[ACP]. Its pathway is glycolipid biosynthesis; lipid IV(A) biosynthesis; lipid IV(A) from (3R)-3-hydroxytetradecanoyl-[acyl-carrier-protein] and UDP-N-acetyl-alpha-D-glucosamine: step 1/6. Involved in the biosynthesis of lipid A, a phosphorylated glycolipid that anchors the lipopolysaccharide to the outer membrane of the cell. The protein is Acyl-[acyl-carrier-protein]--UDP-N-acetylglucosamine O-acyltransferase of Salmonella heidelberg (strain SL476).